The primary structure comprises 445 residues: UDP-N-acetylmuramoylalanine--D-glutamate ligase (445 aa).

ATP is bound at residue 126–132; that stretch reads GTSGKTT.

It belongs to the MurCDEF family.

The protein localises to the cytoplasm. It catalyses the reaction UDP-N-acetyl-alpha-D-muramoyl-L-alanine + D-glutamate + ATP = UDP-N-acetyl-alpha-D-muramoyl-L-alanyl-D-glutamate + ADP + phosphate + H(+). It participates in cell wall biogenesis; peptidoglycan biosynthesis. Its function is as follows. Cell wall formation. Catalyzes the addition of glutamate to the nucleotide precursor UDP-N-acetylmuramoyl-L-alanine (UMA). The chain is UDP-N-acetylmuramoylalanine--D-glutamate ligase from Nitratidesulfovibrio vulgaris (strain DSM 19637 / Miyazaki F) (Desulfovibrio vulgaris).